The chain runs to 91 residues: Potassium channel toxin MeuTXK-beta-1 (91 aa).

The signal sequence occupies residues 1-19 (MQRNLVVLLFLGMVALSSC). Positions 54–91 (QFGCPAYQGYCDDHCQDIEKKEGFCHGFKCKCGIPMGF) constitute a BetaSPN-type CS-alpha/beta domain. Cystine bridges form between C57–C78, C64–C83, and C68–C85.

Expressed by the venom gland.

It localises to the secreted. Its function is as follows. Has a low affinity binding to potassium channels of rat brain synaptosomes. Displays weak antibacterial activity against Stenotrophomonas sp. Strongly inhibits the development of the Plasmodium berghei ookinetes. Displays slight hemolytic effect on mouse erythrocytes. Induces cytolysis on Xenopus oocytes at high concentrations. Is not toxic towards mice and towards the insect Tenebrio molitor. The protein is Potassium channel toxin MeuTXK-beta-1 of Mesobuthus eupeus (Lesser Asian scorpion).